The following is a 396-amino-acid chain: MSDTLLNPYFGEFGGMYVPEILVPVLKQLEETFVAAQNDPLFQAEFTDLLKNYAGRPTALTLCRNLTKGSKTKLYLKREDLLHGGAHKTNQVLGQALLAKRMGKTRIIAETGAGQHGVATALACAMLDLPCVIYMGAKDVERQSPNVFRMRLMGAEVIPVQKGSCSLKDACCEAMRDWAANYETTHYLIGTAAGPHPFPTMVREFQKMIGEETKRQILEKENRLPDAVIAAVGGGSNAIGMFAGFIEEKSVQLIGVEPAGKGIETGEHGAPLKHGTTGIYFGMKSPIMQTKDGQIEESYSISAGLDFPSVGPQHAYLNASGRADYVSITDKEALDAFQALAQHEGIIPALESSHALAYALKLIAQNPDKEQLLVVNLSGRGDKDIFTVDKILNGGN.

Lys88 is modified (N6-(pyridoxal phosphate)lysine).

This sequence belongs to the TrpB family. Tetramer of two alpha and two beta chains. The cofactor is pyridoxal 5'-phosphate.

The catalysed reaction is (1S,2R)-1-C-(indol-3-yl)glycerol 3-phosphate + L-serine = D-glyceraldehyde 3-phosphate + L-tryptophan + H2O. The protein operates within amino-acid biosynthesis; L-tryptophan biosynthesis; L-tryptophan from chorismate: step 5/5. Its function is as follows. The beta subunit is responsible for the synthesis of L-tryptophan from indole and L-serine. This is Tryptophan synthase beta chain from Actinobacillus pleuropneumoniae serotype 7 (strain AP76).